Here is an 809-residue protein sequence, read N- to C-terminus: MAYEASLIEKKWQKIWDENEYFEPKDDLNLPKKYILSMFPYPSGRIHMGHVRNYTIGDALARYYRKIGFNVLHPIGFDSFGMPAENAAIKHKIHPKSWTYENIAYMKKELFSLGFSFSKKRMLATSDPLYTKFEQEFFIKMFEKGLIYTKEANVNWCEQDQTVLANEQVEDGKCWRCGHEVAQKKMPGYYVKITAYAEELLKDLEELKDKWPNQVLTMQENWIGKSEGLEFSLNLDEESKQKTKESSLEVFTTRADTIYGVSYIALAPEHKIVQNLLSQNLLNQDVLNKIKAIQNQSPRERQSSEKEGYFLGIYAIHPLSGEKIPLWVANFILADYGSGAVMAVPAHDERDFEFATKYNLAIKQVIQTQENLPYTQKSGKLIHSQEFDNLDCNEARLKIISQFEAKNIGKRVVNFKIRDWGVSRQRYWGAPIPMIKCQSCGIVPQKLENLPITLPEDVQITGEGNPLDKHPTWKNCICPKCGKEAQKESDTLDTFFESSWYFARFASDEKTWQEKALDEKSVKYWMSVDQYIGGIEHAILHLLYARFFQKALRDLGYLTQNEPFDRLLTQGMVLKDGAKMSKSKGNVVDPDEIIEKYGADTARLFILFAAPPAKELEWNDDAVEGAYRFICKLYDRAQNVKKGELVELKQENLNKEEKYARLKVYEALKKSFEVYHQSFAFNTLIAACMEALNALALCKNEALEQEAFYIILNILEPIIPHVCFELSEELFKCKNFKKLELKEEVFVKDTLNLAVSINGKKRAEFEISSSASKEEILAFAKENTAKWLEGKSIVKEIYVEGKLVNLVIK.

The 'HIGH' region motif lies at Pro-40–His-50. Positions Lys-579–Ser-583 match the 'KMSKS' region motif. Lys-582 lines the ATP pocket.

Belongs to the class-I aminoacyl-tRNA synthetase family.

The protein localises to the cytoplasm. It carries out the reaction tRNA(Leu) + L-leucine + ATP = L-leucyl-tRNA(Leu) + AMP + diphosphate. In Campylobacter jejuni subsp. jejuni serotype O:23/36 (strain 81-176), this protein is Leucine--tRNA ligase.